The chain runs to 293 residues: Acetylglutamate kinase (293 aa).

Residues 68–69 (GG), Arg-90, and Asn-189 each bind substrate.

It belongs to the acetylglutamate kinase family. ArgB subfamily.

It localises to the cytoplasm. It carries out the reaction N-acetyl-L-glutamate + ATP = N-acetyl-L-glutamyl 5-phosphate + ADP. It participates in amino-acid biosynthesis; L-arginine biosynthesis; N(2)-acetyl-L-ornithine from L-glutamate: step 2/4. Functionally, catalyzes the ATP-dependent phosphorylation of N-acetyl-L-glutamate. This chain is Acetylglutamate kinase, found in Caldicellulosiruptor bescii (strain ATCC BAA-1888 / DSM 6725 / KCTC 15123 / Z-1320) (Anaerocellum thermophilum).